Here is a 203-residue protein sequence, read N- to C-terminus: Holliday junction branch migration complex subunit RuvA (203 aa).

The segment at 1 to 64 (MIGRLRGIII…EDAQLLYGFN (64 aa)) is domain I. The segment at 65–142 (NKQERTLFKE…KGLHGDLFTP (78 aa)) is domain II. The segment at 143 to 154 (AADLVLTSPASP) is flexible linker. Residues 155–203 (ATDDAEQEAVAALVALGYKPQEASRMVSKIARPDASSETLIREALHAAL) form a domain III region.

Belongs to the RuvA family. In terms of assembly, homotetramer. Forms an RuvA(8)-RuvB(12)-Holliday junction (HJ) complex. HJ DNA is sandwiched between 2 RuvA tetramers; dsDNA enters through RuvA and exits via RuvB. An RuvB hexamer assembles on each DNA strand where it exits the tetramer. Each RuvB hexamer is contacted by two RuvA subunits (via domain III) on 2 adjacent RuvB subunits; this complex drives branch migration. In the full resolvosome a probable DNA-RuvA(4)-RuvB(12)-RuvC(2) complex forms which resolves the HJ.

The protein localises to the cytoplasm. Functionally, the RuvA-RuvB-RuvC complex processes Holliday junction (HJ) DNA during genetic recombination and DNA repair, while the RuvA-RuvB complex plays an important role in the rescue of blocked DNA replication forks via replication fork reversal (RFR). RuvA specifically binds to HJ cruciform DNA, conferring on it an open structure. The RuvB hexamer acts as an ATP-dependent pump, pulling dsDNA into and through the RuvAB complex. HJ branch migration allows RuvC to scan DNA until it finds its consensus sequence, where it cleaves and resolves the cruciform DNA. The chain is Holliday junction branch migration complex subunit RuvA from Escherichia fergusonii (strain ATCC 35469 / DSM 13698 / CCUG 18766 / IAM 14443 / JCM 21226 / LMG 7866 / NBRC 102419 / NCTC 12128 / CDC 0568-73).